A 297-amino-acid polypeptide reads, in one-letter code: N-acetylneuraminate lyase (297 aa).

Residues Ser-47 and Thr-48 each coordinate aceneuramate. The Proton donor role is filled by Tyr-137. The active-site Schiff-base intermediate with substrate is the Lys-165. Thr-167, Gly-189, Asp-191, Glu-192, and Ser-208 together coordinate aceneuramate.

This sequence belongs to the DapA family. NanA subfamily. As to quaternary structure, homotetramer.

The protein resides in the cytoplasm. It catalyses the reaction aceneuramate = aldehydo-N-acetyl-D-mannosamine + pyruvate. The protein operates within amino-sugar metabolism; N-acetylneuraminate degradation; D-fructose 6-phosphate from N-acetylneuraminate: step 1/5. In terms of biological role, catalyzes the reversible aldol cleavage of N-acetylneuraminic acid (sialic acid; Neu5Ac) to form pyruvate and N-acetylmannosamine (ManNAc) via a Schiff base intermediate. The polypeptide is N-acetylneuraminate lyase (Escherichia coli (strain SMS-3-5 / SECEC)).